A 94-amino-acid polypeptide reads, in one-letter code: Adaptation to cold protein J (94 aa).

In terms of domain architecture, J spans 3–93 (NHFSVLGIKP…AMRELWDQFY (91 aa)). The essential for interaction with AtcC stretch occupies residues 74-94 (NNVIVTDPNSAMRELWDQFYP).

In terms of assembly, interacts via its C-terminal extension with AtcC. Does not interact with AtcA and AtcB.

Functionally, involved in cold adaptation. The J-domain is functional and can stimulate the ATPase activity of the DnaK chaperone. May work as a co-chaperone of the DnaK system to support cold resistance. This is Adaptation to cold protein J from Shewanella oneidensis (strain ATCC 700550 / JCM 31522 / CIP 106686 / LMG 19005 / NCIMB 14063 / MR-1).